A 115-amino-acid polypeptide reads, in one-letter code: Small ribosomal subunit protein bS6 (115 aa).

Belongs to the bacterial ribosomal protein bS6 family.

Its function is as follows. Binds together with bS18 to 16S ribosomal RNA. This chain is Small ribosomal subunit protein bS6, found in Syntrophotalea carbinolica (strain DSM 2380 / NBRC 103641 / GraBd1) (Pelobacter carbinolicus).